Reading from the N-terminus, the 235-residue chain is Sugar fermentation stimulation protein homolog (235 aa).

It belongs to the SfsA family.

This chain is Sugar fermentation stimulation protein homolog, found in Pseudomonas paraeruginosa (strain DSM 24068 / PA7) (Pseudomonas aeruginosa (strain PA7)).